A 262-amino-acid polypeptide reads, in one-letter code: Probable aminoglycoside 3'-phosphotransferase (262 aa).

Asp-187 serves as the catalytic Proton acceptor.

This sequence belongs to the aminoglycoside phosphotransferase family.

The catalysed reaction is kanamycin A + ATP = kanamycin 3'-phosphate + ADP + H(+). In Lactococcus lactis subsp. lactis (strain IL1403) (Streptococcus lactis), this protein is Probable aminoglycoside 3'-phosphotransferase (ymdC).